We begin with the raw amino-acid sequence, 161 residues long: Putative HTH-type transcriptional regulator MT1325 (161 aa).

Residues 2–132 (RMSAKAEYAV…EETTLADVAG (131 aa)) form the HTH rrf2-type domain.

This is Putative HTH-type transcriptional regulator MT1325 from Mycobacterium tuberculosis (strain CDC 1551 / Oshkosh).